A 152-amino-acid polypeptide reads, in one-letter code: Aspartate-rich protein (152 aa).

Residues 1–19 (MQKLLLAVLFFSLLAVATA) form the signal peptide. Positions 82 to 113 (ATPKTEAEPGSLDKGEGTKGEKGKEGKKEKGE) are enriched in basic and acidic residues. Residues 82–152 (ATPKTEAEPG…VHENDDENED (71 aa)) are disordered. A compositionally biased stretch (acidic residues) spans 135–152 (DDDDDRDDVHENDDENED).

In terms of tissue distribution, prismatic layer of shell (at protein level). Expressed primarily in the mantle with highest level in the mantle edge and lower level in the mantle pallium.

It localises to the secreted. In Margaritifera margaritifera (Freshwater pearl mussel), this protein is Aspartate-rich protein.